A 235-amino-acid chain; its full sequence is Large ribosomal subunit protein uL1 (235 aa).

Belongs to the universal ribosomal protein uL1 family. As to quaternary structure, part of the 50S ribosomal subunit.

Functionally, binds directly to 23S rRNA. The L1 stalk is quite mobile in the ribosome, and is involved in E site tRNA release. Its function is as follows. Protein L1 is also a translational repressor protein, it controls the translation of the L11 operon by binding to its mRNA. The polypeptide is Large ribosomal subunit protein uL1 (Mycolicibacterium vanbaalenii (strain DSM 7251 / JCM 13017 / BCRC 16820 / KCTC 9966 / NRRL B-24157 / PYR-1) (Mycobacterium vanbaalenii)).